A 167-amino-acid polypeptide reads, in one-letter code: NADH-ubiquinone oxidoreductase chain 6 (167 aa).

The next 5 helical transmembrane spans lie at 1–21 (MVLMVVFSVMFLISLIAVASN), 23–43 (SPYFAAFGLMVGAGVGCGMLM), 47–67 (MTFLSMILFLIYLGGMLVVFA), 86–106 (VFSYVLVYMFLVIVAWVAFVG), and 133–153 (AGGYMLFIAGWVLLMALLVVL).

The protein belongs to the complex I subunit 6 family.

The protein localises to the mitochondrion membrane. It carries out the reaction a ubiquinone + NADH + 5 H(+)(in) = a ubiquinol + NAD(+) + 4 H(+)(out). Core subunit of the mitochondrial membrane respiratory chain NADH dehydrogenase (Complex I) that is believed to belong to the minimal assembly required for catalysis. Complex I functions in the transfer of electrons from NADH to the respiratory chain. The immediate electron acceptor for the enzyme is believed to be ubiquinone. The chain is NADH-ubiquinone oxidoreductase chain 6 (MT-ND6) from Polypterus ornatipinnis (Ornate bichir).